A 174-amino-acid polypeptide reads, in one-letter code: UPF0316 protein lwe1794 (174 aa).

The next 3 membrane-spanning stretches (helical) occupy residues 4–24 (GLFI…IYTV), 36–56 (LAAL…SLVL), and 62–82 (IANV…GMKI).

Belongs to the UPF0316 family.

It localises to the cell membrane. The protein is UPF0316 protein lwe1794 of Listeria welshimeri serovar 6b (strain ATCC 35897 / DSM 20650 / CCUG 15529 / CIP 8149 / NCTC 11857 / SLCC 5334 / V8).